We begin with the raw amino-acid sequence, 428 residues long: Arabinosyltransferase RRA2 (428 aa).

Over 1 to 15 (MAGRRDRIQQLRGSR) the chain is Cytoplasmic. A helical; Signal-anchor for type II membrane protein transmembrane segment spans residues 16–36 (IAIAIFVGILIGCVCSVLFPN). Residues 37–428 (GFFNSGSSLI…ALDSFPDGSD (392 aa)) lie on the Lumenal side of the membrane. Positions 250 to 252 (DVD) match the DXD motif motif. N278 carries an N-linked (GlcNAc...) asparagine glycan.

This sequence belongs to the glycosyltransferase 77 family. In terms of tissue distribution, expressed in roots, rosette and cauline leaves, stems, flowers and siliques.

The protein localises to the golgi apparatus membrane. In terms of biological role, plays a role in the arabinosylation of cell wall components. Involved in the arabinosylation of extensin proteins in root hair cells. Extensins are structural glycoproteins present in cell walls and its arabinosylation is important for root hair cell development. The protein is Arabinosyltransferase RRA2 of Arabidopsis thaliana (Mouse-ear cress).